The sequence spans 1005 residues: Probable beta-galactosidase A (1005 aa).

Residues 1–18 form the signal peptide; that stretch reads MKLLSVAAVALLAAQAAG. The substrate site is built by Tyr96, Asn140, Ala141, and Glu142. Asn156 carries N-linked (GlcNAc...) asparagine glycosylation. Asn199 serves as a coordination point for substrate. Glu200 functions as the Proton donor in the catalytic mechanism. A disulfide bridge links Cys205 with Cys206. Tyr260 is a binding site for substrate. A disulfide bond links Cys266 and Cys315. The active-site Nucleophile is the Glu298. Tyr364 is a binding site for substrate. N-linked (GlcNAc...) asparagine glycosylation is found at Asn373, Asn402, Asn453, Asn478, Asn522, Asn622, Asn760, Asn777, Asn805, and Asn914.

The protein belongs to the glycosyl hydrolase 35 family.

It localises to the secreted. It carries out the reaction Hydrolysis of terminal non-reducing beta-D-galactose residues in beta-D-galactosides.. In terms of biological role, cleaves beta-linked terminal galactosyl residues from gangliosides, glycoproteins, and glycosaminoglycans. The polypeptide is Probable beta-galactosidase A (lacA) (Aspergillus flavus (strain ATCC 200026 / FGSC A1120 / IAM 13836 / NRRL 3357 / JCM 12722 / SRRC 167)).